Reading from the N-terminus, the 316-residue chain is Serpentine receptor class gamma-8 (316 aa).

7 consecutive transmembrane segments (helical) span residues 28–48, 60–80, 106–126, 147–167, 186–206, 235–255, and 267–287; these read FVQV…LYVV, PFFM…IFIT, LYYP…IFLT, FSRI…NTII, IIPW…VVMI, ACAA…MKVL, and LVQP…MIFA.

It belongs to the nematode receptor-like protein srg family.

It localises to the membrane. The sequence is that of Serpentine receptor class gamma-8 (srg-8) from Caenorhabditis elegans.